A 337-amino-acid polypeptide reads, in one-letter code: MRVLGIETSCDETGIAVYDDKAGLLANQLYSQVKLHADYGGVVPELASRDHVRKTVPLIQAALKEANLSAKDIDAVAYTAGPGLVGALLVGATIGRALAFAWGVPAVPVHHMEGHLLAPMLEENAPEFPFVALLVSGGHTQLISVTGIGEYLLLGESVDDAAGEAFDKTAKLLGLDYPGGPMLSRMAQQGTVGRFTFPRPMTDRPGLDFSFSGLKTFAANTIRANGDDDQTRADIARAFEDAVVDTLAIKSKRALDQTGFKRLVIAGGVSANQTLRLKLADMMQKRGGEVFYARPEFCTDNGAMIAYAGMVRLRSNLNSELSVSVRPRWPLSELPKV.

Residues His111 and His115 each contribute to the Fe cation site. Residues 134-138 (LVSGG), Asp167, Gly180, and Asn272 contribute to the substrate site. Residue Asp300 participates in Fe cation binding.

Belongs to the KAE1 / TsaD family. The cofactor is Fe(2+).

It localises to the cytoplasm. It carries out the reaction L-threonylcarbamoyladenylate + adenosine(37) in tRNA = N(6)-L-threonylcarbamoyladenosine(37) in tRNA + AMP + H(+). Its function is as follows. Required for the formation of a threonylcarbamoyl group on adenosine at position 37 (t(6)A37) in tRNAs that read codons beginning with adenine. Is involved in the transfer of the threonylcarbamoyl moiety of threonylcarbamoyl-AMP (TC-AMP) to the N6 group of A37, together with TsaE and TsaB. TsaD likely plays a direct catalytic role in this reaction. This Yersinia pseudotuberculosis serotype I (strain IP32953) protein is tRNA N6-adenosine threonylcarbamoyltransferase.